Consider the following 777-residue polypeptide: MTVTIATLGFPRIGPKRELKFALEAYWAGKTDADALLDTARDLRAKTWTRQAALGVAHVPSNDFSLYDHVLDTAVMVGAIPAAYGWSGGTVDLATYFAMARGDQGRPAAEACGPGCGHAPGADGVPALEMTKWFDTNYHYLAPELSPGQAFALTSSKPVDEFLEAKALGVHTRPVLLGPVTFLKLAKTKAEGFSPLSLLSALLPVYGQVLRGLAAAGADWVQIDEPCLALDLTDFERAELRRAYGALTHAAPGVRLMLTSYFGGYGENLATAVNLPVEGLHLDLVRAPDELEAALAASRESLVLSLGVIDGRNVWRADLPALLDRLEPVVARRGSDRVVLAPSCSLLHTPIDLDLETALDPEIRQWLAFAVQKVEALAVLAQALNGGRASVAAALEASAQAARARATSPRIHDPKVAERLAAVTPDMTRRRSPYDQRREAQRARLNLPPLPTTTIGSFPQTTEVRQARAAFAKGQISDATYEAFLRQETARAVAWQETVGLDVLVHGEFERNDMVQYFGEQLAGFAFTQSGWVQSYGSRCVRPPILFGDVSRPAPMTVDWWRYAQGLTRRPMKGMLTGPVTILNWSFVRDDLPRETACRQIALAIRDEVVDLEATGAAIIQIDEAALREGLPLRRGDWDAYLDWAVESFRLAASGVADATQIHTHMCYSEFNDIIAAIGAMDADVISIETARSKMELLDAFVGYAYPAQIGPGVYDIHSPRVPAVEEMTTLLAAARQRLAGEQLWVNPDCGLKTRKWPETQAAIVNMVEAARRARAS.

5-methyltetrahydropteroyltri-L-glutamate contacts are provided by residues 17–20 (RELK) and Lys132. Residues 455-457 (IGS) and Glu508 contribute to the L-homocysteine site. Residues 455–457 (IGS) and Glu508 contribute to the L-methionine site. Residues 539 to 540 (RC) and Trp585 contribute to the 5-methyltetrahydropteroyltri-L-glutamate site. Residue Asp623 coordinates L-homocysteine. Residue Asp623 participates in L-methionine binding. 5-methyltetrahydropteroyltri-L-glutamate is bound at residue Glu629. Residues His665, Cys667, and Glu689 each coordinate Zn(2+). Catalysis depends on His718, which acts as the Proton donor. Cys750 provides a ligand contact to Zn(2+).

It belongs to the vitamin-B12 independent methionine synthase family. Requires Zn(2+) as cofactor.

It catalyses the reaction 5-methyltetrahydropteroyltri-L-glutamate + L-homocysteine = tetrahydropteroyltri-L-glutamate + L-methionine. The protein operates within amino-acid biosynthesis; L-methionine biosynthesis via de novo pathway; L-methionine from L-homocysteine (MetE route): step 1/1. Catalyzes the transfer of a methyl group from 5-methyltetrahydrofolate to homocysteine resulting in methionine formation. The chain is 5-methyltetrahydropteroyltriglutamate--homocysteine methyltransferase from Caulobacter vibrioides (strain ATCC 19089 / CIP 103742 / CB 15) (Caulobacter crescentus).